A 575-amino-acid polypeptide reads, in one-letter code: Protein AUXIN SIGNALING F-BOX 2 (575 aa).

The F-box domain maps to 1–47 (MNYFPDEVIEHVFDFVTSHKDRNAISLVCKSWYKIERYSRQKVFIGN). Lysine 69 contacts 1D-myo-inositol hexakisphosphate. The interaction with auxin-responsive proteins stretch occupies residues 76–77 (DF). 1D-myo-inositol hexakisphosphate-binding positions include 108–109 (KR) and arginine 340. The tract at residues 343 to 348 (PSDLLG) is interaction with auxin-responsive proteins. 396 to 398 (RFR) contributes to the 1D-myo-inositol hexakisphosphate binding site. Positions 400-404 (CILEP) are interaction with auxin-responsive proteins. Arginine 431 contributes to the 1D-myo-inositol hexakisphosphate binding site. Residues 459 to 460 (AF) form an interaction with auxin-responsive proteins region. 1D-myo-inositol hexakisphosphate is bound by residues 479–480 (KK) and arginine 504.

Part of a SCF (SKP1-cullin-F-box) protein ligase complex. Interacts with Aux/IAA proteins (IAA7) in an auxin-dependent manner. In terms of tissue distribution, ubiquitous, with higher levels in seedlings.

Its subcellular location is the nucleus. It functions in the pathway protein modification; protein ubiquitination. In terms of biological role, component of SCF(ASK-cullin-F-box) E3 ubiquitin ligase complexes, which may mediate the ubiquitination and subsequent proteasomal degradation of target proteins. Confers sensitivity to the virulent bacterial pathogen P.syringae. Auxin receptor that mediates Aux/IAA proteins proteasomal degradation and auxin-regulated transcription. Involved in embryogenesis regulation by auxin. In Arabidopsis thaliana (Mouse-ear cress), this protein is Protein AUXIN SIGNALING F-BOX 2 (AFB2).